The primary structure comprises 210 residues: Large ribosomal subunit protein bL25 (210 aa).

Positions 175–210 (IATILPPQQEEEIDSGEQQEAGQPDAAEGRETTPEE) are disordered. A compositionally biased stretch (basic and acidic residues) spans 201 to 210 (AEGRETTPEE).

This sequence belongs to the bacterial ribosomal protein bL25 family. CTC subfamily. Part of the 50S ribosomal subunit; part of the 5S rRNA/L5/L18/L25 subcomplex. Contacts the 5S rRNA. Binds to the 5S rRNA independently of L5 and L18.

In terms of biological role, this is one of the proteins that binds to the 5S RNA in the ribosome where it forms part of the central protuberance. This Geobacillus kaustophilus (strain HTA426) protein is Large ribosomal subunit protein bL25.